Consider the following 174-residue polypeptide: MPKYYCDYCDKYLTHDSPSVRKSHTVGKQHKLAVQLFYQQFEAEFTQSLIEARLKEYEESKGRLIHQPPMGIIPTPYGQMYQQQQQQQQQQGILPFQGMQPPPHQQQGMVLSPGMPIHKMQPHQFNNNNNPHQQHSFQPPHHQHHPHQQHQQHQQHQHQHQHQQQHNQPTIPGL.

Residues 4–36 form a Matrin-type zinc finger; that stretch reads YYCDYCDKYLTHDSPSVRKSHTVGKQHKLAVQL. 2 stretches are compositionally biased toward low complexity: residues 82-109 and 122-140; these read QQQQ…QQGM and PHQF…FQPP. Residues 82 to 174 are disordered; sequence QQQQQQQQQQ…QHNQPTIPGL (93 aa). Basic residues predominate over residues 141–163; the sequence is HHQHHPHQQHQQHQQHQHQHQHQ. Residues 164-174 show a composition bias toward low complexity; sequence QQHNQPTIPGL.

This sequence belongs to the U1 small nuclear ribonucleoprotein C family. Component of the U1 snRNP. The U1 snRNP is composed of the U1 snRNA and the 7 core Sm proteins SNRPB, SNRPD1, SNRPD2, SNRPD3, SNRPE, SNRPF and SNRPG that assemble in a heptameric protein ring on the Sm site of the small nuclear RNA to form the core snRNP, and at least 3 U1 snRNP-specific proteins SNRNP70/U1-70K, SNRPA/U1-A and SNRPC/U1-C. SNRPC/U1-C interacts with U1 snRNA and the 5' splice-site region of the pre-mRNA.

It is found in the nucleus. Functionally, component of the spliceosomal U1 snRNP, which is essential for recognition of the pre-mRNA 5' splice-site and the subsequent assembly of the spliceosome. SNRPC/U1-C is directly involved in initial 5' splice-site recognition for both constitutive and regulated alternative splicing. The interaction with the 5' splice-site seems to precede base-pairing between the pre-mRNA and the U1 snRNA. Stimulates commitment or early (E) complex formation by stabilizing the base pairing of the 5' end of the U1 snRNA and the 5' splice-site region. The sequence is that of U1 small nuclear ribonucleoprotein C from Dictyostelium discoideum (Social amoeba).